Here is a 604-residue protein sequence, read N- to C-terminus: Glutamine--fructose-6-phosphate aminotransferase [isomerizing] (604 aa).

Cysteine 2 functions as the Nucleophile; for GATase activity in the catalytic mechanism. The 217-residue stretch at 2 to 218 folds into the Glutamine amidotransferase type-2 domain; sequence CGIVGVVGNT…DKELVIVKKD (217 aa). SIS domains lie at 284–423 and 456–594; these read IIKS…ANGK and VEQL…VDKP. Catalysis depends on lysine 599, which acts as the For Fru-6P isomerization activity.

In terms of assembly, homodimer.

It is found in the cytoplasm. It catalyses the reaction D-fructose 6-phosphate + L-glutamine = D-glucosamine 6-phosphate + L-glutamate. Catalyzes the first step in hexosamine metabolism, converting fructose-6P into glucosamine-6P using glutamine as a nitrogen source. This is Glutamine--fructose-6-phosphate aminotransferase [isomerizing] from Streptococcus agalactiae serotype III (strain NEM316).